The chain runs to 238 residues: uncharacterized protein (238 aa).

Residues 1 to 20 (MNNVKLLIAGSAFFAMSAQA) form the signal peptide.

This sequence to E.coli GltF.

This is an uncharacterized protein from Escherichia coli (strain K12).